The primary structure comprises 359 residues: Heat-inducible transcription repressor HrcA (359 aa).

It belongs to the HrcA family.

In terms of biological role, negative regulator of class I heat shock genes (grpE-dnaK-dnaJ and groELS operons). Prevents heat-shock induction of these operons. In Roseiflexus castenholzii (strain DSM 13941 / HLO8), this protein is Heat-inducible transcription repressor HrcA.